The sequence spans 130 residues: Large ribosomal subunit protein bL20 (130 aa).

This sequence belongs to the bacterial ribosomal protein bL20 family.

Its function is as follows. Binds directly to 23S ribosomal RNA and is necessary for the in vitro assembly process of the 50S ribosomal subunit. It is not involved in the protein synthesizing functions of that subunit. The polypeptide is Large ribosomal subunit protein bL20 (Solibacter usitatus (strain Ellin6076)).